Reading from the N-terminus, the 386-residue chain is MFPEPPTPGPPSPDTPPDSSRISHGPVPPWALATIVLVSGLLIFSCCFCLYRKSCRRRTGKKSQAQAQVHLQEVKGLGQSYIDKVQPEVEELEPAPSGPGQQVADKHELGRLQYSLDYDFQSGQLLVGILQAMGLAALDLGGSSDPYVRVYLLPDKRRRYETKVHRQTLNPHFGETFAFKVPYVELGGRVLVMAVYDFDRFSRNDAIGEVRVPMSSVDLGRPVQAWRELQAAPREEQEKLGDICFSLRYVPTAGKLTVIVLEAKNLKKMDVGGLSDPYVKVHLLQGGKKVRKKKTTIKKNTLNPYYNEAFSFEVPCDQVQKVQVELTVLDYDKLGKNEAIGRVAVGAAAGGAGLRHWADMLANPRRPIAQWHSLRPPDRVRLLPAP.

The span at 1 to 16 shows a compositional bias: pro residues; sequence MFPEPPTPGPPSPDTP. The tract at residues 1–23 is disordered; sequence MFPEPPTPGPPSPDTPPDSSRIS. The Vesicular portion of the chain corresponds to 1 to 24; that stretch reads MFPEPPTPGPPSPDTPPDSSRISH. A helical membrane pass occupies residues 25–45; it reads GPVPPWALATIVLVSGLLIFS. At 46-386 the chain is on the cytoplasmic side; that stretch reads CCFCLYRKSC…PDRVRLLPAP (341 aa). C2 domains lie at 108-227 and 239-372; these read ELGR…QAWR and KLGD…AQWH. Positions 138, 139, 145, 197, 198, 199, 202, 205, 270, 276, 330, and 332 each coordinate Ca(2+).

The protein belongs to the synaptotagmin family. Homodimer. Interacts with both alpha- and beta-tubulin. Ca(2+) serves as cofactor.

It localises to the cytoplasmic vesicle. The protein localises to the secretory vesicle. It is found in the synaptic vesicle membrane. Its subcellular location is the recycling endosome membrane. May be involved in Ca(2+)-dependent exocytosis of secretory vesicles through Ca(2+) and phospholipid binding to the C2 domain or may serve as Ca(2+) sensors in the process of vesicular trafficking and exocytosis. Regulates the Ca(2+)-dependent secretion of norepinephrine in PC12 cells. Required for export from the endocytic recycling compartment to the cell surface. The chain is Synaptotagmin-5 (SYT5) from Homo sapiens (Human).